A 316-amino-acid chain; its full sequence is Ribosomal protein L11 methyltransferase (316 aa).

S-adenosyl-L-methionine-binding residues include Thr-160, Gly-181, Asp-203, and Asn-246.

This sequence belongs to the methyltransferase superfamily. PrmA family.

The protein localises to the cytoplasm. It carries out the reaction L-lysyl-[protein] + 3 S-adenosyl-L-methionine = N(6),N(6),N(6)-trimethyl-L-lysyl-[protein] + 3 S-adenosyl-L-homocysteine + 3 H(+). Its function is as follows. Methylates ribosomal protein L11. This Heliobacterium modesticaldum (strain ATCC 51547 / Ice1) protein is Ribosomal protein L11 methyltransferase.